Reading from the N-terminus, the 174-residue chain is Crossover junction endodeoxyribonuclease RuvC (174 aa).

Residues aspartate 16, glutamate 76, and aspartate 148 contribute to the active site. 3 residues coordinate Mg(2+): aspartate 16, glutamate 76, and aspartate 148.

This sequence belongs to the RuvC family. As to quaternary structure, homodimer which binds Holliday junction (HJ) DNA. The HJ becomes 2-fold symmetrical on binding to RuvC with unstacked arms; it has a different conformation from HJ DNA in complex with RuvA. In the full resolvosome a probable DNA-RuvA(4)-RuvB(12)-RuvC(2) complex forms which resolves the HJ. Mg(2+) serves as cofactor.

Its subcellular location is the cytoplasm. It catalyses the reaction Endonucleolytic cleavage at a junction such as a reciprocal single-stranded crossover between two homologous DNA duplexes (Holliday junction).. The RuvA-RuvB-RuvC complex processes Holliday junction (HJ) DNA during genetic recombination and DNA repair. Endonuclease that resolves HJ intermediates. Cleaves cruciform DNA by making single-stranded nicks across the HJ at symmetrical positions within the homologous arms, yielding a 5'-phosphate and a 3'-hydroxyl group; requires a central core of homology in the junction. The consensus cleavage sequence is 5'-(A/T)TT(C/G)-3'. Cleavage occurs on the 3'-side of the TT dinucleotide at the point of strand exchange. HJ branch migration catalyzed by RuvA-RuvB allows RuvC to scan DNA until it finds its consensus sequence, where it cleaves and resolves the cruciform DNA. This chain is Crossover junction endodeoxyribonuclease RuvC, found in Rhodopseudomonas palustris (strain BisA53).